The primary structure comprises 707 residues: Matrix metalloproteinase-9 (707 aa).

The first 19 residues, 1-19 (MSPRQPLVLALLVLGCCSA), serve as a signal peptide directing secretion. Positions 20–106 (APRRRQPTLV…PRCGVPDVGK (87 aa)) are cleaved as a propeptide — activation peptide. Asn-88 carries N-linked (GlcNAc...) asparagine glycosylation. Positions 97 to 104 (PRCGVPDV) match the Cysteine switch motif. Cys-99 lines the Zn(2+) pocket. 2 N-linked (GlcNAc...) asparagine glycosylation sites follow: Asn-120 and Asn-127. Positions 131 and 165 each coordinate Ca(2+). The Zn(2+) site is built by His-175 and Asp-177. 4 residues coordinate Ca(2+): Asp-182, Gly-183, Asp-185, and Leu-187. Zn(2+) is bound at residue His-190. Ca(2+)-binding residues include Gly-197, Gln-199, and Asp-201. His-203 is a Zn(2+) binding site. 3 residues coordinate Ca(2+): Asp-205, Asp-206, and Glu-208. Fibronectin type-II domains follow at residues 225–273 (ADGA…FCPS), 283–331 (ADGK…FCPT), and 342–390 (SAGE…FCPD). Intrachain disulfides connect Cys-230-Cys-256, Cys-244-Cys-271, Cys-288-Cys-314, Cys-302-Cys-329, Cys-347-Cys-373, and Cys-361-Cys-388. His-401 provides a ligand contact to Zn(2+). The active site involves Glu-402. 2 residues coordinate Zn(2+): His-405 and His-411. The tract at residues 437–508 (RGIQHLYGPN…ASPSAAPTAS (72 aa)) is disordered. The segment covering 446-467 (NPNPQPPATTTPEPQPTAPPTA) has biased composition (pro residues). A compositionally biased stretch (low complexity) spans 481–493 (PTTSPTGAPSAGP). An intrachain disulfide couples Cys-516 to Cys-704. Hemopexin repeat units follow at residues 518-563 (VNVF…WPAL), 564-608 (PAKL…GLGP), 610-657 (VPHV…FPGV), and 658-704 (PLNT…ILHC).

This sequence belongs to the peptidase M10A family. Exists as monomer or homodimer; disulfide-linked. Also exists as heterodimer with LCN2. Macrophages and transformed cell lines produce only the monomeric form. Interacts with ECM1. Requires Zn(2+) as cofactor. Ca(2+) serves as cofactor. In terms of processing, N- and O-glycosylated. Osteoclasts.

It localises to the secreted. The protein localises to the extracellular space. The protein resides in the extracellular matrix. It carries out the reaction Cleavage of gelatin types I and V and collagen types IV and V.. Functionally, matrix metalloproteinase that plays an essential role in local proteolysis of the extracellular matrix and in leukocyte migration. Could play a role in bone osteoclastic resorption. Cleaves KiSS1 at a Gly-|-Leu bond. Cleaves NINJ1 to generate the Secreted ninjurin-1 form. Cleaves type IV and type V collagen into large C-terminal three quarter fragments and shorter N-terminal one quarter fragments. Degrades fibronectin but not laminin or Pz-peptide. The polypeptide is Matrix metalloproteinase-9 (Oryctolagus cuniculus (Rabbit)).